The chain runs to 77 residues: Sec-independent protein translocase protein TatA (77 aa).

Residues 2-22 traverse the membrane as a helical segment; that stretch reads GFGGISIWQLLIILLIVVMLF. Basic and acidic residues-rich tracts occupy residues 46 to 59 and 66 to 77; these read DNGEAEKPAVEEPK and QARKVEEPAKKD. Residues 46–77 are disordered; sequence DNGEAEKPAVEEPKGQTIDAQARKVEEPAKKD.

Belongs to the TatA/E family. In terms of assembly, the Tat system comprises two distinct complexes: a TatABC complex, containing multiple copies of TatA, TatB and TatC subunits, and a separate TatA complex, containing only TatA subunits. Substrates initially bind to the TatABC complex, which probably triggers association of the separate TatA complex to form the active translocon.

The protein resides in the cell inner membrane. Part of the twin-arginine translocation (Tat) system that transports large folded proteins containing a characteristic twin-arginine motif in their signal peptide across membranes. TatA could form the protein-conducting channel of the Tat system. The polypeptide is Sec-independent protein translocase protein TatA (Ectopseudomonas mendocina (strain ymp) (Pseudomonas mendocina)).